We begin with the raw amino-acid sequence, 122 residues long: Large ribosomal subunit protein uL14 (122 aa).

The protein belongs to the universal ribosomal protein uL14 family. Part of the 50S ribosomal subunit. Forms a cluster with proteins L3 and L19. In the 70S ribosome, L14 and L19 interact and together make contacts with the 16S rRNA in bridges B5 and B8.

Its function is as follows. Binds to 23S rRNA. Forms part of two intersubunit bridges in the 70S ribosome. This Marinomonas sp. (strain MWYL1) protein is Large ribosomal subunit protein uL14.